Here is a 407-residue protein sequence, read N- to C-terminus: Na(+)-translocating NADH-quinone reductase subunit F (407 aa).

Residues 6–26 (IFLAIGMFTAIVLGLVAIILV) form a helical membrane-spanning segment. Residues 35–127 (GDVTIQINGE…DMQIRVPEEV (93 aa)) form the 2Fe-2S ferredoxin-type domain. The [2Fe-2S] cluster site is built by cysteine 70, cysteine 76, cysteine 79, and cysteine 111. In terms of domain architecture, FAD-binding FR-type spans 130-269 (VKKWECTVES…YGPFGEFFAK (140 aa)). Residues 272-389 (EAEMVFIGGG…PMMNAAVIKM (118 aa)) are catalytic.

Belongs to the NqrF family. Composed of six subunits; NqrA, NqrB, NqrC, NqrD, NqrE and NqrF. It depends on [2Fe-2S] cluster as a cofactor. FAD is required as a cofactor.

The protein resides in the cell inner membrane. The enzyme catalyses a ubiquinone + n Na(+)(in) + NADH + H(+) = a ubiquinol + n Na(+)(out) + NAD(+). In terms of biological role, NQR complex catalyzes the reduction of ubiquinone-1 to ubiquinol by two successive reactions, coupled with the transport of Na(+) ions from the cytoplasm to the periplasm. The first step is catalyzed by NqrF, which accepts electrons from NADH and reduces ubiquinone-1 to ubisemiquinone by a one-electron transfer pathway. This is Na(+)-translocating NADH-quinone reductase subunit F from Pseudomonas aeruginosa (strain ATCC 15692 / DSM 22644 / CIP 104116 / JCM 14847 / LMG 12228 / 1C / PRS 101 / PAO1).